The primary structure comprises 962 residues: Translation initiation factor IF-2 (962 aa).

Residues A101–P366 are disordered. A compositionally biased stretch (basic and acidic residues) spans D117 to K141. Residues A145–K157 are compositionally biased toward low complexity. Residues K173–K216 are compositionally biased toward basic and acidic residues. A compositionally biased stretch (low complexity) spans K219–E234. The segment covering Q235–M269 has biased composition (basic and acidic residues). Residues K270–A283 show a composition bias toward low complexity. Residues G338–R354 are compositionally biased toward basic and acidic residues. The region spanning P462 to T631 is the tr-type G domain. The G1 stretch occupies residues G471–T478. Residue G471–T478 coordinates GTP. A G2 region spans residues G496–H500. The G3 stretch occupies residues D517–G520. Residues D517–H521 and N571–D574 each bind GTP. A G4 region spans residues N571 to D574. Residues S607 to K609 are G5.

The protein belongs to the TRAFAC class translation factor GTPase superfamily. Classic translation factor GTPase family. IF-2 subfamily.

It is found in the cytoplasm. In terms of biological role, one of the essential components for the initiation of protein synthesis. Protects formylmethionyl-tRNA from spontaneous hydrolysis and promotes its binding to the 30S ribosomal subunits. Also involved in the hydrolysis of GTP during the formation of the 70S ribosomal complex. The polypeptide is Translation initiation factor IF-2 (Neisseria meningitidis serogroup A / serotype 4A (strain DSM 15465 / Z2491)).